A 238-amino-acid polypeptide reads, in one-letter code: tRNA (guanine-N(7)-)-methyltransferase (238 aa).

Polar residues predominate over residues 1–12 (MTDTAENQTPND). The disordered stretch occupies residues 1–20 (MTDTAENQTPNDRQAGHPRS). Residues E70, D95, D122, and D145 each contribute to the S-adenosyl-L-methionine site. The active site involves D145. Substrate-binding positions include K149, D181, and 216–219 (TKFE).

Belongs to the class I-like SAM-binding methyltransferase superfamily. TrmB family.

It carries out the reaction guanosine(46) in tRNA + S-adenosyl-L-methionine = N(7)-methylguanosine(46) in tRNA + S-adenosyl-L-homocysteine. The protein operates within tRNA modification; N(7)-methylguanine-tRNA biosynthesis. Functionally, catalyzes the formation of N(7)-methylguanine at position 46 (m7G46) in tRNA. This is tRNA (guanine-N(7)-)-methyltransferase from Neisseria meningitidis serogroup C (strain 053442).